The primary structure comprises 445 residues: Argininosuccinate synthase (445 aa).

ATP contacts are provided by residues 17-25 and alanine 43; that span reads AFSGGLDTS. Tyrosine 99 lines the L-citrulline pocket. The ATP site is built by glycine 129 and threonine 131. Threonine 131, asparagine 135, and aspartate 136 together coordinate L-aspartate. Residue asparagine 135 coordinates L-citrulline. An ATP-binding site is contributed by aspartate 136. Positions 139 and 192 each coordinate L-citrulline. An ATP-binding site is contributed by aspartate 194. L-citrulline contacts are provided by threonine 201, glutamate 203, and glutamate 280.

The protein belongs to the argininosuccinate synthase family. Type 2 subfamily. As to quaternary structure, homotetramer.

It is found in the cytoplasm. It catalyses the reaction L-citrulline + L-aspartate + ATP = 2-(N(omega)-L-arginino)succinate + AMP + diphosphate + H(+). Its pathway is amino-acid biosynthesis; L-arginine biosynthesis; L-arginine from L-ornithine and carbamoyl phosphate: step 2/3. The chain is Argininosuccinate synthase (argG) from Burkholderia multivorans (strain ATCC 17616 / 249).